Consider the following 349-residue polypeptide: 1-acylglycerol-3-phosphate O-acyltransferase ABHD5 (349 aa).

At Ala-2 the chain carries N-acetylalanine. In terms of domain architecture, AB hydrolase-1 spans 77–184 (PLVLLHGFGG…LVEPWGFPER (108 aa)). At Ser-122 the chain carries Phosphoserine. The short motif at 327-332 (HYVYAD) is the HXXXXD motif element.

It belongs to the peptidase S33 family. ABHD4/ABHD5 subfamily. As to quaternary structure, interacts with ADRP, PLIN and PNPLA2. Interacts with PLIN5; promotes interaction with PNPLA2. In terms of tissue distribution, widely expressed in various tissues, including lymphocytes, liver, skeletal muscle and brain. Expressed by upper epidermal layers and dermal fibroblasts in skin, hepatocytes and neurons (at protein level).

It localises to the cytoplasm. It is found in the lipid droplet. The protein resides in the cytosol. The catalysed reaction is a 1-acyl-sn-glycero-3-phosphate + an acyl-CoA = a 1,2-diacyl-sn-glycero-3-phosphate + CoA. It carries out the reaction 1-(9Z-octadecenoyl)-sn-glycero-3-phosphate + hexadecanoyl-CoA = 1-(9Z)-octadecenoyl-2-hexadecanoyl-sn-glycero-3-phosphate + CoA. It catalyses the reaction 1-(9Z-octadecenoyl)-sn-glycero-3-phosphate + octadecanoyl-CoA = 1-(9Z-octadecenoyl)-2-octadecanoyl-sn-glycero-3-phosphate + CoA. The enzyme catalyses 1-(9Z-octadecenoyl)-sn-glycero-3-phosphate + (9Z)-octadecenoyl-CoA = 1,2-di-(9Z-octadecenoyl)-sn-glycero-3-phosphate + CoA. The catalysed reaction is 1-(9Z-octadecenoyl)-sn-glycero-3-phosphate + (5Z,8Z,11Z,14Z)-eicosatetraenoyl-CoA = 1-(9Z)-octadecenoyl-2-(5Z,8Z,11Z,14Z)-eicosatetraenoyl-sn-glycero-3-phosphate + CoA. It carries out the reaction eicosanoyl-CoA + 1-(9Z-octadecenoyl)-sn-glycero-3-phosphate = 1-(9Z)-octadecenoyl-2-eicosanoyl-sn-glycero-3-phosphate + CoA. It catalyses the reaction 1-hexadecanoyl-sn-glycero-3-phosphate + (9Z)-octadecenoyl-CoA = 1-hexadecanoyl-2-(9Z-octadecenoyl)-sn-glycero-3-phosphate + CoA. The enzyme catalyses 1-octadecanoyl-sn-glycero-3-phosphate + (9Z)-octadecenoyl-CoA = 1-octadecanoyl-2-(9Z-octadecenoyl)-sn-glycero-3-phosphate + CoA. The catalysed reaction is 1-(5Z,8Z,11Z,14Z-eicosatetraenoyl)-sn-glycero-3-phosphate + (9Z)-octadecenoyl-CoA = 1-(5Z,8Z,11Z,14Z)-eicosatetraenoyl-2-(9Z)-octadecenoyl-sn-glycero-3-phosphate + CoA. Acyltransferase activity is inhibited by detergents such as Triton X-100 and 3-[(3-cholamidopropyl)dimethylammonio]-1-propanesulfonate (CHAPS). Acyltransferase activity is inhibited by the presence of magnesium and calcium. Its function is as follows. Coenzyme A-dependent lysophosphatidic acid acyltransferase that catalyzes the transfer of an acyl group on a lysophosphatidic acid. Functions preferentially with 1-oleoyl-lysophosphatidic acid followed by 1-palmitoyl-lysophosphatidic acid, 1-stearoyl-lysophosphatidic acid and 1-arachidonoyl-lysophosphatidic acid as lipid acceptor. Functions preferentially with arachidonoyl-CoA followed by oleoyl-CoA as acyl group donors. Functions in phosphatidic acid biosynthesis. May regulate the cellular storage of triacylglycerol through activation of the phospholipase PNPLA2. Involved in keratinocyte differentiation. Regulates lipid droplet fusion. The chain is 1-acylglycerol-3-phosphate O-acyltransferase ABHD5 from Homo sapiens (Human).